The chain runs to 147 residues: MERTFIMIKPDAIKRRLISRIIQRFEEKGLYLAASKCVIPKREVLETHYSHLSSMPFFSEMVEDMMSGMVLAMVWVGKDAVSIGRKLIGETNPQAASVGTIRGDYGVSTGKNIIHGSDCVENAEKEIKLWIGDDVQPVSFFDKEWIY.

The ATP site is built by Lys-9, Arg-85, Thr-91, Arg-102, and Asn-112. His-115 functions as the Pros-phosphohistidine intermediate in the catalytic mechanism.

This sequence belongs to the NDK family. It depends on Mg(2+) as a cofactor.

The catalysed reaction is a 2'-deoxyribonucleoside 5'-diphosphate + ATP = a 2'-deoxyribonucleoside 5'-triphosphate + ADP. It catalyses the reaction a ribonucleoside 5'-diphosphate + ATP = a ribonucleoside 5'-triphosphate + ADP. In terms of biological role, major role in the synthesis of nucleoside triphosphates other than ATP. The ATP gamma phosphate is transferred to the NDP beta phosphate via a ping-pong mechanism, using a phosphorylated active-site intermediate. The sequence is that of Nucleoside diphosphate kinase (NDK1) from Encephalitozoon cuniculi (strain GB-M1) (Microsporidian parasite).